The chain runs to 101 residues: Cell division suppressor protein YneA (101 aa).

Residues 35-86 form the LysM domain; it reads MTVTVASGDTLWGLAKQYEPAHGLSPDEFIRWVVDVNRLPSSRLTAGEQIVI.

Belongs to the YneA family.

The protein resides in the cytoplasm. Functionally, inhibits cell division during the SOS response. Affects a later stage of the cell division protein assembly, after the assembly of the Z ring, by probably suppressing recruitment of FtsL and/or DivIC to the division machinery. The polypeptide is Cell division suppressor protein YneA (Geobacillus thermodenitrificans (strain NG80-2)).